A 245-amino-acid chain; its full sequence is NAD(P)H-hydrate epimerase (245 aa).

The YjeF N-terminal domain occupies 21 to 221 (MREIDRLAVQ…DLGIPPAVYT (201 aa)). Position 72–76 (72–76 (GNGGG)) interacts with (6S)-NADPHX. Asn-73 and Asp-135 together coordinate K(+). (6S)-NADPHX is bound by residues 139–145 (GYSLLGA) and Asp-168. Ser-171 provides a ligand contact to K(+).

Belongs to the NnrE/AIBP family. K(+) serves as cofactor.

The catalysed reaction is (6R)-NADHX = (6S)-NADHX. It carries out the reaction (6R)-NADPHX = (6S)-NADPHX. Catalyzes the epimerization of the S- and R-forms of NAD(P)HX, a damaged form of NAD(P)H that is a result of enzymatic or heat-dependent hydration. This is a prerequisite for the S-specific NAD(P)H-hydrate dehydratase to allow the repair of both epimers of NAD(P)HX. The polypeptide is NAD(P)H-hydrate epimerase (Dehalogenimonas lykanthroporepellens (strain ATCC BAA-1523 / JCM 15061 / BL-DC-9)).